The following is a 295-amino-acid chain: Calcium-regulated actin-bundling protein (295 aa).

As to quaternary structure, monomer.

In terms of biological role, may contribute to the structure and reorganization of filopodia and pseudopodia accompanying cell movements. This chain is Calcium-regulated actin-bundling protein (abpB), found in Dictyostelium discoideum (Social amoeba).